We begin with the raw amino-acid sequence, 2238 residues long: COPII coat assembly protein SEC16 (2238 aa).

Residues 1–20 are compositionally biased toward basic residues; sequence MTPEAKRKKNQKKKLRQKQK. 15 disordered regions span residues 1-115, 135-161, 173-255, 297-363, 394-596, 642-666, 757-787, 824-878, 892-988, 1547-1577, 1600-1703, 1732-1766, 1809-1901, 1928-2102, and 2133-2238; these read MTPE…DNYH, GGSI…SDPD, GQPL…DYPK, EEVD…DTHK, DDEQ…TSAD, MSTS…SINT, FTNQ…PAQI, GNSA…SPST, LVHS…TVLP, PPTN…NRPN, GKKS…PPIQ, TASP…MDPK, NEEE…PKGK, RPQE…GWLK, and KNAS…MENL. A compositionally biased stretch (polar residues) spans 45 to 87; the sequence is LTSNSNVSTPDYTSNFEISVTSTQEVNVDSQLSQNQNSDNFIN. The segment covering 100 to 115 has biased composition (basic and acidic residues); that stretch reads FDSHEDIESEMKDNYH. 2 stretches are compositionally biased toward polar residues: residues 135–144 and 217–236; these read GGSIDSSNTV and LASN…NLLT. 2 stretches are compositionally biased toward basic and acidic residues: residues 238-255 and 297-322; these read NRLE…DYPK and EEVD…HSEE. Over residues 325–335 the composition is skewed to polar residues; that stretch reads TSSVSTQTGMA. Residues 351–363 show a composition bias toward basic and acidic residues; sequence KMEERNINSDTHK. Acidic residues predominate over residues 394–404; sequence DDEQSVNDLQD. The span at 405–448 shows a compositional bias: polar residues; the sequence is ESSLLQEETTFSQIPKNEVNTENQENIGSESVSKINVANENSME. Composition is skewed to basic and acidic residues over residues 480–513 and 535–553; these read EVSH…KKED and MKSE…KEES. Composition is skewed to polar residues over residues 556–596, 657–666, and 757–784; these read NVRT…TSAD, RPSSHSSINT, and FTNQ…SVNP. Over residues 824–842 the composition is skewed to low complexity; that stretch reads GNSAVSTTSGKSVGTSVAT. 8 stretches are compositionally biased toward polar residues: residues 843 to 878, 893 to 936, 946 to 957, 1548 to 1565, 1610 to 1638, 1732 to 1747, 1824 to 1849, and 1936 to 1948; these read KQNP…SPST, VHSS…SQND, STGQYAGYSSHS, PTNT…QRAV, NRAS…STPN, TASP…SNYS, VDQS…TVSI, and TSSI…QISN. Basic and acidic residues predominate over residues 1963 to 1972; that stretch reads VELKQDEVSK. Residues 2034-2053 are compositionally biased toward acidic residues; it reads QYDDVVEEDSDDSDDSEDDS.

This sequence belongs to the SEC16 family.

Its subcellular location is the endoplasmic reticulum membrane. Involved in the initiation of assembly of the COPII coat required for the formation of transport vesicles from the endoplasmic reticulum (ER) and the selection of cargo molecules. Also involved in autophagy. The chain is COPII coat assembly protein SEC16 (SEC16) from Candida glabrata (strain ATCC 2001 / BCRC 20586 / JCM 3761 / NBRC 0622 / NRRL Y-65 / CBS 138) (Yeast).